The chain runs to 553 residues: Protein PALS2 (553 aa).

L27 domains are found at residues 1-48 (MQQV…EDSK) and 49-107 (LEAV…YDSP). The region spanning 129-208 (ILGIHKKAGE…SVTLKILPSY (80 aa)) is the PDZ domain. The region spanning 228–297 (VRQVFVKCHF…PSQFLEEKRK (70 aa)) is the SH3 domain. Positions 351-538 (RKTLVLIGAQ…AFEKLQTAIE (188 aa)) constitute a Guanylate kinase-like domain. Tyr513 is subject to Phosphotyrosine.

The protein belongs to the MAGUK family. As to quaternary structure, interacts with CADM1. Interacts with the LIN7 proteins.

The protein resides in the membrane. The chain is Protein PALS2 from Mus musculus (Mouse).